The primary structure comprises 81 residues: Short neurotoxin SN160 (81 aa).

A signal peptide spans 1 to 21; sequence MKTLLLTLVVVTIVCLDLGYT. Cystine bridges form between C24/C43, C38/C60, C62/C73, and C74/C79.

It belongs to the three-finger toxin family. Short-chain subfamily. Type I alpha-neurotoxin sub-subfamily. As to expression, expressed by the venom gland.

The protein resides in the secreted. In terms of biological role, binds to muscle nicotinic acetylcholine receptor (nAChR) and inhibit acetylcholine from binding to the receptor, thereby impairing neuromuscular transmission. The polypeptide is Short neurotoxin SN160 (Hydrophis hardwickii (Hardwick's spine-bellied seasnake)).